We begin with the raw amino-acid sequence, 266 residues long: Ribosome-recycling factor, chloroplastic (266 aa).

Positions 1–26 (MPPLHAVSPAAAAAPPRALSSAARVP) are enriched in low complexity. The tract at residues 1–30 (MPPLHAVSPAAAAAPPRALSSAARVPQRPG) is disordered. Residues 1 to 74 (MPPLHAVSPA…SDKRAVLRHA (74 aa)) constitute a chloroplast transit peptide. 2 coiled-coil regions span residues 75-109 (TIEE…NTVR) and 207-266 (VAIR…LMKI).

Belongs to the RRF family.

It is found in the plastid. The protein localises to the chloroplast. Functionally, responsible for the release of ribosomes from messenger RNA at the termination of chloroplastic protein biosynthesis. This is Ribosome-recycling factor, chloroplastic from Oryza sativa subsp. indica (Rice).